A 449-amino-acid chain; its full sequence is Gallate transporter (449 aa).

12 helical membrane passes run 26–46, 62–82, 92–112, 123–143, 155–175, 183–203, 262–282, 298–318, 326–346, 349–369, 388–408, and 414–434; these read WLIL…VAVM, AAFG…ALTA, KKVL…CAFA, LLTG…LAEY, IMFT…AWLI, VLLA…WLLP, LALW…MGWL, TITG…GWIM, VIAI…ALSL, SLLV…QTAL, WMLG…GAVL, and LPLL…AILA.

Belongs to the major facilitator superfamily. Sugar transporter (TC 2.A.1.1) family.

Its subcellular location is the membrane. Its function is as follows. Transporter that specifically mediates the uptake of gallate. The sequence is that of Gallate transporter (galT) from Pseudomonas putida (Arthrobacter siderocapsulatus).